Consider the following 258-residue polypeptide: Phosphate import ATP-binding protein PstB 3 (258 aa).

The 244-residue stretch at 10-253 (MTARSLAVHY…PANSLTQGYI (244 aa)) folds into the ABC transporter domain. Position 42-49 (42-49 (GPSGCGKS)) interacts with ATP.

Belongs to the ABC transporter superfamily. Phosphate importer (TC 3.A.1.7) family. As to quaternary structure, the complex is composed of two ATP-binding proteins (PstB), two transmembrane proteins (PstC and PstA) and a solute-binding protein (PstS).

It localises to the cell inner membrane. The enzyme catalyses phosphate(out) + ATP + H2O = ADP + 2 phosphate(in) + H(+). Its function is as follows. Part of the ABC transporter complex PstSACB involved in phosphate import. Responsible for energy coupling to the transport system. The polypeptide is Phosphate import ATP-binding protein PstB 3 (Paramagnetospirillum magneticum (strain ATCC 700264 / AMB-1) (Magnetospirillum magneticum)).